Reading from the N-terminus, the 448-residue chain is Nucleoprotein (448 aa).

The interval 1 to 55 (MSFTPGKQSSSRASSGNRSGNGILKWADQSDQSRNVQTRGRRAQPKQTATSQQPS) is disordered. Low complexity predominate over residues 9-22 (SSSRASSGNRSGNG). 2 stretches are compositionally biased toward polar residues: residues 29–38 (QSDQSRNVQT) and 45–55 (PKQTATSQQPS). The RNA-binding stretch occupies residues 52-194 (QQPSGGNVVP…GYYIEGSGRS (143 aa)). One can recognise a CoV N NTD domain in the interval 61 to 190 (PYYSWFSGIT…VLPQGYYIEG (130 aa)). Residues R106, R122, and R164 each contribute to the RNA site. Disordered stretches follow at residues 157 to 231 (TPAD…VTPD), 266 to 298 (ILNKPRQKRSPNKQCTVQQCFGKRGPNQNFGGG), and 385 to 448 (GMMN…TSEI). Phosphoserine; by host is present on S167. T174 is subject to Phosphothreonine; by host. At S191 the chain carries Phosphoserine; by host. Over residues 193–214 (RSAPNSRSTSRASSRASSAGSR) the composition is skewed to low complexity. A CoV N CTD domain is found at 259-384 (AKEIRQKILN…ENLNAYQQQD (126 aa)). A compositionally biased stretch (basic residues) spans 266–276 (ILNKPRQKRSP). The segment at 266–384 (ILNKPRQKRS…ENLNAYQQQD (119 aa)) is dimerization. S390 carries the post-translational modification Phosphoserine; by host. Polar residues predominate over residues 399 to 409 (QKNGQGENDNI). Residues 422–439 (KSRELTAEDISLLKKMDE) are compositionally biased toward basic and acidic residues. Phosphoserine; by host is present on S423. The residue at position 427 (T427) is a Phosphothreonine; by host.

It belongs to the betacoronavirus nucleocapsid protein family. Homooligomer. Both monomeric and oligomeric forms interact with RNA. Interacts with protein M. Interacts with NSP3; this interaction serves to tether the genome to the newly translated replicase-transcriptase complex at a very early stage of infection. In terms of processing, ADP-ribosylated. The ADP-ribosylation is retained in the virion during infection. Post-translationally, phosphorylated on serine and threonine residues.

It localises to the virion. The protein resides in the host endoplasmic reticulum-Golgi intermediate compartment. Its subcellular location is the host Golgi apparatus. Its function is as follows. Packages the positive strand viral genome RNA into a helical ribonucleocapsid (RNP) and plays a fundamental role during virion assembly through its interactions with the viral genome and membrane protein M. Plays an important role in enhancing the efficiency of subgenomic viral RNA transcription as well as viral replication. The sequence is that of Nucleoprotein from Bovine coronavirus (strain LY-138) (BCoV).